Reading from the N-terminus, the 684-residue chain is Glycine--tRNA ligase beta subunit (684 aa).

It belongs to the class-II aminoacyl-tRNA synthetase family. Tetramer of two alpha and two beta subunits.

The protein resides in the cytoplasm. It carries out the reaction tRNA(Gly) + glycine + ATP = glycyl-tRNA(Gly) + AMP + diphosphate. The sequence is that of Glycine--tRNA ligase beta subunit from Stutzerimonas stutzeri (strain A1501) (Pseudomonas stutzeri).